The chain runs to 220 residues: Urease accessory protein UreF (220 aa).

Belongs to the UreF family. As to quaternary structure, ureD, UreF and UreG form a complex that acts as a GTP-hydrolysis-dependent molecular chaperone, activating the urease apoprotein by helping to assemble the nickel containing metallocenter of UreC. The UreE protein probably delivers the nickel.

Its subcellular location is the cytoplasm. Required for maturation of urease via the functional incorporation of the urease nickel metallocenter. The protein is Urease accessory protein UreF of Jannaschia sp. (strain CCS1).